We begin with the raw amino-acid sequence, 355 residues long: Vacuolar protein sorting-associated protein 37C (355 aa).

Position 29 is a phosphoserine (Ser29). The VPS37 C-terminal domain occupies 78–167 (VERCQEQKAK…RKPRASQELA (90 aa)). Residues 159–355 (KPRASQELAG…PPPGPAWPGY (197 aa)) are disordered. 2 stretches are compositionally biased toward pro residues: residues 170–186 (APPP…PQGT) and 194–214 (PQPP…PSLP). Residues 291 to 304 (APSPGYPQQSPYPA) are compositionally biased toward low complexity. Positions 321–355 (PGQPQPSVPLQPPYPPGPAPPYGFPPPPGPAWPGY) are enriched in pro residues.

The protein belongs to the VPS37 family. In terms of assembly, component of the ESCRT-I complex (endosomal sorting complex required for transport I) which consists of TSG101, VPS28, a VPS37 protein (VPS37A to -D) and MVB12A or MVB12B in a 1:1:1:1 stoichiometry. Interacts with TSG101, VPS28, MVB12A and MVB12B. Component of the ESCRT-I complex (endosomal sorting complex required for transport I) which consists of TSG101, VPS28, a VPS37 protein (VPS37A to -D) and UBAP1 in a 1:1:1:1 stoichiometry. Interacts with HGS and STAM2. Interacts with CEP55. Phosphorylated by TBK1.

It is found in the late endosome membrane. In terms of biological role, component of the ESCRT-I complex, a regulator of vesicular trafficking process. Required for the sorting of endocytic ubiquitinated cargos into multivesicular bodies. May be involved in cell growth and differentiation. This chain is Vacuolar protein sorting-associated protein 37C (VPS37C), found in Homo sapiens (Human).